The sequence spans 207 residues: Vascular endothelial growth factor B (207 aa).

Residues 1–21 (MSPLLRRLLLVALLQLARTQA) form the signal peptide. 3 cysteine pairs are disulfide-bonded: cysteine 47-cysteine 89, cysteine 78-cysteine 122, and cysteine 82-cysteine 124. A compositionally biased stretch (basic and acidic residues) spans 129–139 (KESAVKPDRVA). The interval 129 to 178 (KESAVKPDRVAIPHHRPQPRSVPGWDSTPGASSPADIIHPTPAPGSSARL) is disordered.

The protein belongs to the PDGF/VEGF growth factor family. Homodimer; disulfide-linked. Can also form heterodimer with VEGF. VEGF-B186 is O-glycosylated. As to expression, abundantly expressed in heart, brain, kidney and skeletal muscle.

It is found in the secreted. Functionally, growth factor for endothelial cells. VEGF-B167 binds heparin and neuropilin-1 whereas the binding to neuropilin-1 of VEGF-B186 is regulated by proteolysis. VEGF-B seems to be required for normal heart function in adult but is not required for proper development of the cardiovascular system either during development or for angiogenesis in adults. This is Vascular endothelial growth factor B (Vegfb) from Mus musculus (Mouse).